The primary structure comprises 307 residues: Acetyl-coenzyme A carboxylase carboxyl transferase subunit beta (307 aa).

The CoA carboxyltransferase N-terminal domain occupies 28–297; that stretch reads LWVKCPDTGQ…TPQPGTAPEP (270 aa). A disordered region spans residues 286–307; sequence RRTPQPGTAPEPTTPEPLPNAA. The segment covering 292–307 has biased composition (pro residues); it reads GTAPEPTTPEPLPNAA.

Belongs to the AccD/PCCB family. As to quaternary structure, acetyl-CoA carboxylase is a heterohexamer composed of biotin carboxyl carrier protein (AccB), biotin carboxylase (AccC) and two subunits each of ACCase subunit alpha (AccA) and ACCase subunit beta (AccD).

The protein resides in the cytoplasm. The enzyme catalyses N(6)-carboxybiotinyl-L-lysyl-[protein] + acetyl-CoA = N(6)-biotinyl-L-lysyl-[protein] + malonyl-CoA. The protein operates within lipid metabolism; malonyl-CoA biosynthesis; malonyl-CoA from acetyl-CoA: step 1/1. In terms of biological role, component of the acetyl coenzyme A carboxylase (ACC) complex. Biotin carboxylase (BC) catalyzes the carboxylation of biotin on its carrier protein (BCCP) and then the CO(2) group is transferred by the transcarboxylase to acetyl-CoA to form malonyl-CoA. The chain is Acetyl-coenzyme A carboxylase carboxyl transferase subunit beta from Methylorubrum extorquens (strain CM4 / NCIMB 13688) (Methylobacterium extorquens).